The chain runs to 423 residues: CinA-like protein (423 aa).

It belongs to the CinA family.

In Chlorobium phaeobacteroides (strain DSM 266 / SMG 266 / 2430), this protein is CinA-like protein.